Reading from the N-terminus, the 236-residue chain is UPF0502 protein Bcep1808_3727 (236 aa).

It belongs to the UPF0502 family.

The polypeptide is UPF0502 protein Bcep1808_3727 (Burkholderia vietnamiensis (strain G4 / LMG 22486) (Burkholderia cepacia (strain R1808))).